We begin with the raw amino-acid sequence, 928 residues long: Retinoblastoma-associated protein (928 aa).

The interval M1–L42 is disordered. Residue P2 is modified to N,N-dimethylproline. Low complexity predominate over residues K8 to E19. Positions P29–P39 are enriched in acidic residues. S37 carries the post-translational modification Phosphoserine. S249 carries the phosphoserine; by CDK1 modification. T252 carries the post-translational modification Phosphothreonine; by CDK1. T356 carries the phosphothreonine modification. T373 carries the post-translational modification Phosphothreonine; by CDK1. Positions T373 to R579 are domain A. Residues T373 to Y771 form a pocket; binds T and E1A region. The residue at position 567 (S567) is a Phosphoserine; by CDK2. The segment at E580–Q639 is spacer. S608 carries the phosphoserine modification. The interval V610–A632 is disordered. S612 is subject to Phosphoserine; by CHEK2 and CHEK1. Residues T619–A632 show a composition bias toward polar residues. Phosphoserine is present on S624. The segment at K640–Y771 is domain B. The tract at residues R763–K928 is interaction with LIMD1. A domain C; mediates interaction with E4F1 region spans residues Y771–K928. S780, S788, and S795 each carry phosphoserine. Position 807 is a phosphoserine; by CDK1 and CDK3 (S807). At K810 the chain carries N6-methyllysine; by SMYD2. Phosphoserine; by CDK1 and CDK3 is present on S811. At T821 the chain carries Phosphothreonine; by CDK6. T823 carries the post-translational modification Phosphothreonine. T826 is subject to Phosphothreonine; by CDK4. A Phosphothreonine modification is found at T841. S855 is modified (phosphoserine). The residue at position 860 (K860) is an N6-methyllysine; by SMYD2. The Bipartite nuclear localization signal signature appears at K860–R876. Residues K860–K928 form a disordered region. Residues K873 and K874 each carry the N6-acetyllysine; by PCAF modification. Residues K915–K928 show a composition bias toward basic and acidic residues.

Belongs to the retinoblastoma protein (RB) family. In terms of assembly, the hypophosphorylated form interacts with and sequesters the E2F1 transcription factor, thereby inhibiting E2F1 transcription. Interacts with heterodimeric E2F/DP transcription factor complexes containing TFDP1 and either E2F1, E2F3, E2F4 or E2F5, or TFDP2 and E2F4. Interacts (when hyperphosphorylated and hypophosphorylated) with PKP3; the interaction inhibits RB1 interaction with and repression of the transcription factor E2F1, potentially via sequestering RB1 to the cytoplasm. The unphosphorylated form interacts with EID1, ARID3B, KDM5A, SUV39H1, MJD2A/JHDM3A and THOC1. Interacts with the N-terminal domain of TAF1. Interacts with SNW1, ATAD5, AATF, DNMT1, LIN9, LMNA, KMT5B, KMT5C, PELP1, UHRF2 and TMPO-alpha. Interacts with GRIP1 and UBR4. Interacts with ARID4A and KDM5B. Interacts with E4F1 and LIMD1. Interacts with SMARCA4/BRG1 and HDAC1. Interacts with PSMA3 and USP4. Interacts (when methylated at Lys-860) with L3MBTL1. Interacts with CHEK2; phosphorylates RB1. Interacts with CDK1 and CDK2. Interacts with PRMT2. Interacts with CEBPA. P-TEFB complex interacts with RB1; promotes phosphorylation of RB1. Interacts with RBBP9; the interaction disrupts RB1 binding to E2F1. Interacts with KAT2B/PCAF and EP300/P300. Interacts with PAX5. Interacts (phosphorylated and unphosphorylated) with BLCAP. May interact with NDC80. (Microbial infection) Interacts with adenovirus E1A protein. As to quaternary structure, (Microbial infection) Interacts with HPV E7 protein. In terms of assembly, (Microbial infection) Interacts with SV40 large T antigen. (Microbial infection) Interacts with human cytomegalovirus/HHV-5 proteins UL82 and UL123. As to quaternary structure, (Microbial infection) Interacts with molluscum contagiosum virus protein MC007. In terms of processing, phosphorylated by CDK6 and CDK4, and subsequently by CDK2 at Ser-567 in G1, thereby releasing E2F1 which is then able to activate cell growth. Dephosphorylated at the late M phase. SV40 large T antigen, HPV E7 and adenovirus E1A bind to the underphosphorylated, active form of pRb. Phosphorylation at Thr-821 and Thr-826 promotes interaction between the C-terminal domain C and the Pocket domain, and thereby inhibits interactions with heterodimeric E2F/DP transcription factor complexes. Dephosphorylated at Ser-795 by calcineruin upon calcium stimulation. CDK3/cyclin-C-mediated phosphorylation at Ser-807 and Ser-811 is required for G0-G1 transition. Phosphorylated by CDK1 and CDK2 upon TGFB1-mediated apoptosis. Post-translationally, N-terminus is methylated by METTL11A/NTM1. Monomethylation at Lys-810 by SMYD2 enhances phosphorylation at Ser-807 and Ser-811, and promotes cell cycle progression. Monomethylation at Lys-860 by SMYD2 promotes interaction with L3MBTL1. Acetylated during keratinocyte differentiation. Acetylation at Lys-873 and Lys-874 regulates subcellular localization. Can be deacetylated by SIRT1. In terms of tissue distribution, expressed in the retina. Expressed in foreskin keratinocytes (at protein level).

The protein resides in the nucleus. Its subcellular location is the cytoplasm. Tumor suppressor that is a key regulator of the G1/S transition of the cell cycle. The hypophosphorylated form binds transcription regulators of the E2F family, preventing transcription of E2F-responsive genes. Both physically blocks E2Fs transactivating domain and recruits chromatin-modifying enzymes that actively repress transcription. Cyclin and CDK-dependent phosphorylation of RB1 induces its dissociation from E2Fs, thereby activating transcription of E2F responsive genes and triggering entry into S phase. RB1 also promotes the G0-G1 transition upon phosphorylation and activation by CDK3/cyclin-C. Directly involved in heterochromatin formation by maintaining overall chromatin structure and, in particular, that of constitutive heterochromatin by stabilizing histone methylation. Recruits and targets histone methyltransferases SUV39H1, KMT5B and KMT5C, leading to epigenetic transcriptional repression. Controls histone H4 'Lys-20' trimethylation. Inhibits the intrinsic kinase activity of TAF1. Mediates transcriptional repression by SMARCA4/BRG1 by recruiting a histone deacetylase (HDAC) complex to the c-FOS promoter. In resting neurons, transcription of the c-FOS promoter is inhibited by BRG1-dependent recruitment of a phospho-RB1-HDAC1 repressor complex. Upon calcium influx, RB1 is dephosphorylated by calcineurin, which leads to release of the repressor complex. Its function is as follows. (Microbial infection) In case of viral infections, interactions with SV40 large T antigen, HPV E7 protein or adenovirus E1A protein induce the disassembly of RB1-E2F1 complex thereby disrupting RB1's activity. The sequence is that of Retinoblastoma-associated protein (RB1) from Homo sapiens (Human).